Reading from the N-terminus, the 1299-residue chain is DNA-directed RNA polymerase subunit beta' (1299 aa).

Cys60, Cys62, Cys75, and Cys78 together coordinate Zn(2+). The interval 188–209 (GAKSDQKRRAKDGAEKEMGQTR) is disordered. The Mg(2+) site is built by Asp535, Asp537, and Asp539. Zn(2+)-binding residues include Cys882, Cys959, Cys966, and Cys969.

Belongs to the RNA polymerase beta' chain family. In terms of assembly, the RNAP catalytic core consists of 2 alpha, 1 beta, 1 beta' and 1 omega subunit. When a sigma factor is associated with the core the holoenzyme is formed, which can initiate transcription. Mg(2+) is required as a cofactor. The cofactor is Zn(2+).

The catalysed reaction is RNA(n) + a ribonucleoside 5'-triphosphate = RNA(n+1) + diphosphate. In terms of biological role, DNA-dependent RNA polymerase catalyzes the transcription of DNA into RNA using the four ribonucleoside triphosphates as substrates. This is DNA-directed RNA polymerase subunit beta' from Clavibacter sepedonicus (Clavibacter michiganensis subsp. sepedonicus).